The chain runs to 121 residues: Immunoglobulin kappa variable 4-1 (121 aa).

An N-terminal signal peptide occupies residues 1–20 (MVLQTQVFISLLLWISGAYG). Residues 21-43 (DIVMTQSPDSLAVSLGERATINC) form a framework-1 region. Residues 21 to 121 (DIVMTQSPDS…YYCQQYYSTP (101 aa)) enclose the Ig-like domain. A disulfide bond links Cys43 and Cys114. Residues 44–60 (KSSQSVLYSSNNKNYLA) form a complementarity-determining-1 region. Residues 61–75 (WYQQKPGQPPKLLIY) are framework-2. The interval 76–82 (WASTRES) is complementarity-determining-2. Positions 83–114 (GVPDRFSGSGSGTDFTLTISSLQAEDVAVYYC) are framework-3. A complementarity-determining-3 region spans residues 115-121 (QQYYSTP).

As to quaternary structure, immunoglobulins are composed of two identical heavy chains and two identical light chains; disulfide-linked.

It is found in the secreted. The protein localises to the cell membrane. V segment of the variable domain of immunoglobulins light chain that participates in the antigen recognition. Immunoglobulins, also known as antibodies, are membrane-bound or secreted glycoproteins produced by B lymphocytes. In the recognition phase of humoral immunity, the membrane-bound immunoglobulins serve as receptors which, upon binding of a specific antigen, trigger the clonal expansion and differentiation of B lymphocytes into immunoglobulins-secreting plasma cells. Secreted immunoglobulins mediate the effector phase of humoral immunity, which results in the elimination of bound antigens. The antigen binding site is formed by the variable domain of one heavy chain, together with that of its associated light chain. Thus, each immunoglobulin has two antigen binding sites with remarkable affinity for a particular antigen. The variable domains are assembled by a process called V-(D)-J rearrangement and can then be subjected to somatic hypermutations which, after exposure to antigen and selection, allow affinity maturation for a particular antigen. The protein is Immunoglobulin kappa variable 4-1 of Homo sapiens (Human).